Reading from the N-terminus, the 101-residue chain is AFA-III adhesin operon regulatory protein (101 aa).

Regulates the transcription of genes involved in the biosynthesis of afimbrial adhesin-III. This is AFA-III adhesin operon regulatory protein (afaA) from Escherichia coli.